We begin with the raw amino-acid sequence, 705 residues long: Dolichyl-diphosphooligosaccharide--protein glycosyltransferase subunit STT3A (705 aa).

Topologically, residues 1–17 (MTKLGFLRLSYEKQDTL) are cytoplasmic. A helical membrane pass occupies residues 18-38 (LKLLILSMAAVLSFSTRLFAV). Residues 39 to 119 (LRFESVIHEF…IDIRNVCVFL (81 aa)) lie on the Lumenal side of the membrane. The DXD motif 1 motif lies at 47–49 (EFD). Mn(2+) is bound at residue Asp-49. A helical transmembrane segment spans residues 120–138 (APLFSSFTTIVTYHLTKEL). Residues 139-140 (KD) are Cytoplasmic-facing. The chain crosses the membrane as a helical span at residues 141 to 158 (AGAGLLAAAMIAVVPGYI). Topologically, residues 159-169 (SRSVAGSYDNE) are lumenal. Residues Asp-167 and Glu-169 each contribute to the Mn(2+) site. A DXD motif 2 motif is present at residues 167–169 (DNE). The chain crosses the membrane as a helical span at residues 170 to 189 (GIAIFCMLLTYYMWIKAVKT). Residues 190–191 (GS) lie on the Cytoplasmic side of the membrane. A helical membrane pass occupies residues 192-206 (IYWAAKCALAYFYMV). Residues 207-211 (SSWGG) are Lumenal-facing. The helical transmembrane segment at 212-228 (YVFLINLIPLHVLVLML) threads the bilayer. The Cytoplasmic portion of the chain corresponds to 229–233 (TGRFS). Residues 234–259 (HRIYVAYCTVYCLGTILSMQISFVGF) traverse the membrane as a helical segment. At 260 to 267 (QPVLSSEH) the chain is on the lumenal side. The helical transmembrane segment at 268–287 (MAAFGVFGLCQIHAFVDYLR) threads the bilayer. Residues 288–300 (SKLNPQQFEVLFR) lie on the Cytoplasmic side of the membrane. The helical transmembrane segment at 301–321 (SVISLVGFVLLTVGALLMLTG) threads the bilayer. Over 322–356 (KISPWTGRFYSLLDPSYAKNNIPIIASVSEHQPTT) the chain is Lumenal. Positions 348–351 (SVSE) match the SVSE motif motif. A helical membrane pass occupies residues 357 to 379 (WSSYYFDLQLLVFMFPVGLYYCF). Over 380–385 (SNLSDA) the chain is Cytoplasmic. Residues 386–402 (RIFIIMYGVTSMYFSAV) form a helical membrane-spanning segment. The Lumenal portion of the chain corresponds to 403 to 406 (MVRL). Arg-405 is a binding site for dolichyl diphosphooligosaccharide. The helical transmembrane segment at 407 to 428 (MLVLAPVMCILSGIGVSQVLST) threads the bilayer. At 429-453 (YMKNLDISRPDKKSKKQQDSTYPIK) the chain is on the cytoplasmic side. A helical membrane pass occupies residues 454 to 473 (NEVASGMILVMAFFLITYTF). The Lumenal portion of the chain corresponds to 474 to 705 (HSTWVTSEAY…DLDNRGLSRT (232 aa)). The segment at 525–527 (WWD) is interacts with target acceptor peptide in protein substrate. The WWDYG motif motif lies at 525 to 529 (WWDYG). Tyr-530 is a binding site for dolichyl diphosphooligosaccharide. N-linked (GlcNAc...) asparagine glycans are attached at residues Asn-537 and Asn-544. The N-linked (GlcNAc...) (high mannose) asparagine glycan is linked to Asn-548. Residues 592–599 (DINKFLWM) carry the DK motif motif.

This sequence belongs to the STT3 family. In terms of assembly, component of the oligosaccharyltransferase (OST) complex. There are 2 OST complexes, OST-A and OST-B, which contain STT3A or STT3B as catalytic subunit, respectively. OST-A and OST-B contain common core subunits RPN1, RPN2, OST48, OST4, DAD1 and TMEM258, and OST-A contains DC2/OSTC and KRTCAP2/KCP2 specific accessory subunits. OST-A complex assembly occurs through the formation of 3 subcomplexes. Subcomplex 1 contains RPN1 and TMEM258, subcomplex 2 contains the OST-A-specific subunits STT3A, DC2/OSTC, and KCP2 as well as the core subunit OST4, and subcomplex 3 contains RPN2, DAD1, and OST48. The OST-A complex can form stable complexes with the Sec61 complex or with both the Sec61 and TRAP complexes. Mg(2+) serves as cofactor. The cofactor is Mn(2+).

It is found in the endoplasmic reticulum. Its subcellular location is the endoplasmic reticulum membrane. The catalysed reaction is a di-trans,poly-cis-dolichyl diphosphooligosaccharide + L-asparaginyl-[protein] = N(4)-(oligosaccharide-(1-&gt;4)-N-acetyl-beta-D-glucosaminyl-(1-&gt;4)-N-acetyl-beta-D-glucosaminyl)-L-asparaginyl-[protein] + a di-trans,poly-cis-dolichyl diphosphate + H(+). It functions in the pathway protein modification; protein glycosylation. Catalytic subunit of the oligosaccharyl transferase (OST) complex that catalyzes the initial transfer of a defined glycan (Glc(3)Man(9)GlcNAc(2) in eukaryotes) from the lipid carrier dolichol-pyrophosphate to an asparagine residue within an Asn-X-Ser/Thr consensus motif in nascent polypeptide chains, the first step in protein N-glycosylation. N-glycosylation occurs cotranslationally and the complex associates with the Sec61 complex at the channel-forming translocon complex that mediates protein translocation across the endoplasmic reticulum (ER). All subunits are required for a maximal enzyme activity. This subunit contains the active site and the acceptor peptide and donor lipid-linked oligosaccharide (LLO) binding pockets. STT3A is present in the majority of OST complexes and mediates cotranslational N-glycosylation of most sites on target proteins, while STT3B-containing complexes are required for efficient post-translational glycosylation and mediate glycosylation of sites that have been skipped by STT3A. STT3A-containing OST-A complex is also required to prevent hyperglycosylation of some target proteins by preventing glycosylation of facultative sites before folding of target proteins is completed. The sequence is that of Dolichyl-diphosphooligosaccharide--protein glycosyltransferase subunit STT3A from Mus musculus (Mouse).